Reading from the N-terminus, the 165-residue chain is V-type proton ATPase 16 kDa proteolipid subunit (165 aa).

The Lumenal portion of the chain corresponds to 1–12; it reads MSTVFNGDETAP. Residues 13-33 traverse the membrane as a helical segment; sequence FFGFLGAAAALVFSCMGAAYG. Residues 34-55 lie on the Cytoplasmic side of the membrane; the sequence is TAKSGVGVASMGVMRPELVMKS. Residues 56 to 76 form a helical membrane-spanning segment; the sequence is IVPVVMAGVLGIYGLIIAVII. The Lumenal portion of the chain corresponds to 77-95; sequence STGINPKAKSYYLFDGYAH. Residues 96–117 form a helical membrane-spanning segment; it reads LSSGLACGLAGLSAGMAIGIVG. At 118–129 the chain is on the cytoplasmic side; that stretch reads DAGVRANAQQPK. Residues 130-155 traverse the membrane as a helical segment; sequence LFVGMILILIFAEALALYGLIVGIIL. Residues 156-165 lie on the Lumenal side of the membrane; sequence SSRAGQSRAD.

It belongs to the V-ATPase proteolipid subunit family. In terms of assembly, V-ATPase is a heteromultimeric enzyme composed of a peripheral catalytic V1 complex (main components: subunits A, B, C, D, E, and F) attached to an integral membrane V0 proton pore complex (main component: the proteolipid protein; which is present as a hexamer that forms the proton-conducting pore).

Its subcellular location is the vacuole membrane. Proton-conducting pore forming subunit of the membrane integral V0 complex of vacuolar ATPase. V-ATPase is responsible for acidifying a variety of intracellular compartments in eukaryotic cells. This chain is V-type proton ATPase 16 kDa proteolipid subunit (VMAC1), found in Mesembryanthemum crystallinum (Common ice plant).